We begin with the raw amino-acid sequence, 79 residues long: Protein FAM236C (79 aa).

A disordered region spans residues 19–48 (KGPQKDPEELVAVSDTAEDPSSGTGLPREP).

The protein belongs to the FAM236 family.

In Homo sapiens (Human), this protein is Protein FAM236C.